An 894-amino-acid chain; its full sequence is Translation factor GUF1 homolog, mitochondrial (894 aa).

A disordered region spans residues 157–189 (EDEGLDGGPPPGMEAKKSSSSSSSNNVHSNCSD). A compositionally biased stretch (low complexity) spans 174 to 188 (SSSSSSSNNVHSNCS). Residues 199-376 (ENIRNFCILA…RIVSEIPSPA (178 aa)) enclose the tr-type G domain. Residues 208–215 (AHIDSGKS), 269–273 (DTPGH), and 323–326 (NKID) contribute to the GTP site. The interval 649–674 (DHDDCNDNGGSNSDDRSDRSGKNPPD) is disordered.

Belongs to the TRAFAC class translation factor GTPase superfamily. Classic translation factor GTPase family. LepA subfamily.

It localises to the mitochondrion inner membrane. The catalysed reaction is GTP + H2O = GDP + phosphate + H(+). In terms of biological role, promotes mitochondrial protein synthesis. May act as a fidelity factor of the translation reaction, by catalyzing a one-codon backward translocation of tRNAs on improperly translocated ribosomes. Binds to mitochondrial ribosomes in a GTP-dependent manner. The polypeptide is Translation factor GUF1 homolog, mitochondrial (Plasmodium knowlesi (strain H)).